The following is a 382-amino-acid chain: 4-hydroxybutyrate dehydrogenase (382 aa).

Residues Asp-37, Asn-67, 94–98 (GSSID), 138–142 (TTSGT), and Lys-159 each bind NAD(+). Fe cation-binding residues include Asp-193, His-197, His-261, and His-280. His-280 is a binding site for NAD(+).

Belongs to the iron-containing alcohol dehydrogenase family. Fe cation is required as a cofactor.

It carries out the reaction 4-hydroxybutanoate + NAD(+) = succinate semialdehyde + NADH + H(+). Its activity is regulated as follows. Shows competitive inhibition of GHBDH activity by the product succinic semialdehyde, and non-competitive inhibitions by the three other substrate-product combinations. The conversion of GHB to SSA is activated by two different saturating purified nudix hydrolases, B.methanolicus activator ACT and E.coli NudF. The nudix hydrolases do not activate the reverse reaction. Its function is as follows. Involved in the degradation of 4-hydroxybutyrate. Catalyzes the interconversion of gamma-hydroxybutyrate (GHB) and succinic semialdehyde (SSA). The polypeptide is 4-hydroxybutyrate dehydrogenase (Cupriavidus necator (Alcaligenes eutrophus)).